We begin with the raw amino-acid sequence, 452 residues long: Phosphoglucosamine mutase (452 aa).

The active-site Phosphoserine intermediate is the serine 104. Mg(2+)-binding residues include serine 104, aspartate 241, aspartate 243, and aspartate 245. Serine 104 is modified (phosphoserine).

This sequence belongs to the phosphohexose mutase family. It depends on Mg(2+) as a cofactor. In terms of processing, activated by phosphorylation.

It carries out the reaction alpha-D-glucosamine 1-phosphate = D-glucosamine 6-phosphate. Functionally, catalyzes the conversion of glucosamine-6-phosphate to glucosamine-1-phosphate. In Arthrobacter sp. (strain FB24), this protein is Phosphoglucosamine mutase.